A 476-amino-acid chain; its full sequence is MKDTFVEKVDDFVKQHDVLKERSTIVVGVSGGPDSVALLYYLLEKRAAKQFEIVVAHVDHMFRGDESHEDLQFVQDLCKELGVICETIRINVSQYQQQYGMNAQVAARECRYAFLERIMKKYDARYVALGHHGDDQVETILMRLVRGSTPKGYAGIAVKRPFHNGYLIRPLLGVTKEEIVDYCHKLKIIPRIDPSNKKEVYTRNRLRKYVLPHLKEENPQVHEKFQKFSMQMQEDEAYLQELAFEKMNKVITKKSDKQISLSIPAFESMSMPLQRRGIQLILNYLYEYKIPSSLSSIHIDKVIEFFKRTQPSGSLDFPGDLKIVRAYEECSFGFKQEIVSPFLQDLSVPGTITLSNGDKLVTEVSEDIPSNMNETVFVAKYNDISYPLRIRSRENGDRMSIQGMNGTKKIKAIFIEAKVPREKREEWPVVCDARGNVIWLPLLKRSAFAISKETAKKDKYMIIHYKSKESSGRIMK.

30 to 35 (SGGPDS) is a binding site for ATP.

This sequence belongs to the tRNA(Ile)-lysidine synthase family.

The protein localises to the cytoplasm. The enzyme catalyses cytidine(34) in tRNA(Ile2) + L-lysine + ATP = lysidine(34) in tRNA(Ile2) + AMP + diphosphate + H(+). Ligates lysine onto the cytidine present at position 34 of the AUA codon-specific tRNA(Ile) that contains the anticodon CAU, in an ATP-dependent manner. Cytidine is converted to lysidine, thus changing the amino acid specificity of the tRNA from methionine to isoleucine. In Bacillus cereus (strain ATCC 10987 / NRS 248), this protein is tRNA(Ile)-lysidine synthase.